A 221-amino-acid polypeptide reads, in one-letter code: Stromal cell-derived factor 2-like protein 1 (221 aa).

Positions 1–28 (MWGASRGRVAGPTLLGLLLALSVRSGGA) are cleaved as a signal peptide. 3 consecutive MIR domains span residues 33-87 (AGLV…IRGG), 95-150 (GLPV…VRCS), and 151-205 (GQHW…AMEG). Serine 215 carries the phosphoserine modification. A Prevents secretion from ER motif is present at residues 218 to 221 (HDEL).

As to expression, ubiquitously expressed with high expression in the testis, ovary, uterus, and low expression in heart and skeletal muscle.

The protein resides in the endoplasmic reticulum lumen. In Mus musculus (Mouse), this protein is Stromal cell-derived factor 2-like protein 1 (Sdf2l1).